A 450-amino-acid chain; its full sequence is Tubulin alpha chain (450 aa).

A GTP-binding site is contributed by Q11. The residue at position 40 (K40) is an N6-acetyllysine. GTP is bound by residues E71, S140, G144, T145, T179, N206, and N228. E71 lines the Mg(2+) pocket. E254 is an active-site residue.

It belongs to the tubulin family. As to quaternary structure, dimer of alpha and beta chains. A typical microtubule is a hollow water-filled tube with an outer diameter of 25 nm and an inner diameter of 15 nM. Alpha-beta heterodimers associate head-to-tail to form protofilaments running lengthwise along the microtubule wall with the beta-tubulin subunit facing the microtubule plus end conferring a structural polarity. Microtubules usually have 13 protofilaments but different protofilament numbers can be found in some organisms and specialized cells. Requires Mg(2+) as cofactor. In terms of processing, acetylation of alpha chains at Lys-40 stabilizes microtubules and affects affinity and processivity of microtubule motors. This modification has a role in multiple cellular functions, ranging from cell motility, cell cycle progression or cell differentiation to intracellular trafficking and signaling.

Its subcellular location is the cytoplasm. The protein localises to the cytoskeleton. It carries out the reaction GTP + H2O = GDP + phosphate + H(+). Functionally, tubulin is the major constituent of microtubules, a cylinder consisting of laterally associated linear protofilaments composed of alpha- and beta-tubulin heterodimers. Microtubules grow by the addition of GTP-tubulin dimers to the microtubule end, where a stabilizing cap forms. Below the cap, tubulin dimers are in GDP-bound state, owing to GTPase activity of alpha-tubulin. The sequence is that of Tubulin alpha chain from Tyrophagus putrescentiae (Mold mite).